The sequence spans 302 residues: tRNA pseudouridine synthase B (302 aa).

Asp-47 serves as the catalytic Nucleophile.

This sequence belongs to the pseudouridine synthase TruB family. Type 1 subfamily.

It catalyses the reaction uridine(55) in tRNA = pseudouridine(55) in tRNA. Responsible for synthesis of pseudouridine from uracil-55 in the psi GC loop of transfer RNAs. In Methylobacillus flagellatus (strain ATCC 51484 / DSM 6875 / VKM B-1610 / KT), this protein is tRNA pseudouridine synthase B.